We begin with the raw amino-acid sequence, 243 residues long: HTH-type transcriptional repressor NagR (243 aa).

The 69-residue stretch at 9-77 (IPIYYQIMEQ…KGRGTFVSKP (69 aa)) folds into the HTH gntR-type domain. Residues 37-56 (EREYAEQFGISRMTVRQALS) constitute a DNA-binding region (H-T-H motif). Residues 89-90 (FT), 133-135 (RVR), glutamate 145, 165-167 (SIY), glutamate 222, and tyrosine 228 contribute to the alpha-D-glucosamine 6-phosphate site. N-acetyl-D-glucosamine 6-phosphate is bound by residues 89-90 (FT), 133-135 (RVR), glutamate 145, 165-167 (SIY), glutamate 222, and tyrosine 228.

As to quaternary structure, homodimer. Forms dimers via the C-terminal effector-binding domain. At high concentrations, probably forms polymers along the DNA.

Its activity is regulated as follows. Binding to DNA is allosterically inhibited by an effector molecule. Binding of the effector to the C-terminal domain leads to a conformational change that modulates binding to DNA and thereby regulates transcription of the target genes. Glucosamine-6-phosphate (GlcN6P) and/or N-acetylglucosamine-6-phosphate (GlcNAc6P) are putative effectors of NagR. Binding of GlcNAc6P may prevent the protein-protein interactions responsible for polymerization along the DNA, but not the specific DNA binding. In terms of biological role, main transcriptional repressor of genes involved in N-acetylglucosamine (GlcNAc) transport and utilization. Represses the expression of the nagAB and nagP operons by binding directly within their upstream regions. Binds to the DNA consensus sequence 5'-ATTGGTATAGACAACT-3'. Also acts as a weak repressor of mapB expression. The chain is HTH-type transcriptional repressor NagR from Bacillus subtilis (strain 168).